The following is a 391-amino-acid chain: S-adenosylmethionine synthase (391 aa).

The disordered stretch occupies residues 1-20; the sequence is MPRSDYLFTSESVSEGHPDK. His-17 lines the ATP pocket. Asp-19 lines the Mg(2+) pocket. Residue Glu-45 coordinates K(+). Glu-58 and Gln-102 together coordinate L-methionine. The tract at residues 102-112 is flexible loop; sequence QSADIAQGVDA. Residues 169–171, 235–236, Asp-244, 250–251, Ala-267, and Lys-271 each bind ATP; these read DAK, KF, and RK. Asp-244 contacts L-methionine. Lys-275 lines the L-methionine pocket.

The protein belongs to the AdoMet synthase family. In terms of assembly, homotetramer; dimer of dimers. The cofactor is Mg(2+). K(+) serves as cofactor.

The protein resides in the cytoplasm. The catalysed reaction is L-methionine + ATP + H2O = S-adenosyl-L-methionine + phosphate + diphosphate. It functions in the pathway amino-acid biosynthesis; S-adenosyl-L-methionine biosynthesis; S-adenosyl-L-methionine from L-methionine: step 1/1. Catalyzes the formation of S-adenosylmethionine (AdoMet) from methionine and ATP. The overall synthetic reaction is composed of two sequential steps, AdoMet formation and the subsequent tripolyphosphate hydrolysis which occurs prior to release of AdoMet from the enzyme. This chain is S-adenosylmethionine synthase, found in Methylorubrum populi (strain ATCC BAA-705 / NCIMB 13946 / BJ001) (Methylobacterium populi).